A 138-amino-acid polypeptide reads, in one-letter code: Basic phospholipase A2 vurtoxin (138 aa).

The signal sequence occupies residues 1–16 (MRTLWIVAVCLIGVEG). Disulfide bonds link Cys42-Cys131, Cys44-Cys60, Cys59-Cys111, Cys65-Cys138, Cys66-Cys104, Cys73-Cys97, and Cys91-Cys102. Ca(2+) contacts are provided by Tyr43, Gly45, and Gly47. The active site involves His63. Asp64 contributes to the Ca(2+) binding site. Residue Asp105 is part of the active site.

Ca(2+) is required as a cofactor. As to expression, expressed by the venom gland.

Its subcellular location is the secreted. The catalysed reaction is a 1,2-diacyl-sn-glycero-3-phosphocholine + H2O = a 1-acyl-sn-glycero-3-phosphocholine + a fatty acid + H(+). In terms of biological role, snake venom phospholipase A2 that may have a strong anticoagulant activity. Is able to suppress the acetylcholine (ACh)-evoked current mediated by alpha-7 (CHRNA7)-similar nAChRs in L.stagnalis neurons (IC(50)=10.5 uM) and to compete with alpha-bungarotoxin for binding to muscle- and alpha-7 neuronal nAChR types, as well as to AChBPs. In inhibition of alpha-bungarotoxin binding, this toxin is mostly active against T.californica nAChR (IC(50)=0.26 uM), it is moderately active against human alpha-7 nAChR (IC(50)=14 uM), and is not active against L.stagnalis and A.californica AChBP (IC(50)&gt;30 uM). The chain is Basic phospholipase A2 vurtoxin from Vipera renardi (Steppe viper).